The sequence spans 185 residues: Gastrokine-1 (185 aa).

Positions 1–20 (MKFTIVFAGLLGVFLAPALA) are cleaved as a signal peptide. Residues 54-150 (NNGWDSWNSI…MCRGIPTYMA (97 aa)) enclose the BRICHOS domain. Cysteines 81 and 142 form a disulfide.

The protein belongs to the gastrokine family. Expressed in stomach (at protein level). No expression is detected in cancer tissue or gastric cancer cell lines.

It localises to the secreted. It is found in the cytoplasmic granule. Its subcellular location is the golgi apparatus. Functionally, has mitogenic activity and may be involved in maintaining the integrity of the gastric mucosal epithelium. This is Gastrokine-1 (GKN1) from Homo sapiens (Human).